Here is a 642-residue protein sequence, read N- to C-terminus: Rhotekin-2 (642 aa).

The region spanning 30–105 (IKRKKIRESM…AQKRTGHQDF (76 aa)) is the REM-1 domain. A PH domain is found at 306–413 (LDMMSGFLSQ…WLDSLWQHIY (108 aa)). Disordered regions lie at residues 505–563 (TVLS…GRPS) and 575–642 (LQKS…PKAW). 2 stretches are compositionally biased toward basic and acidic residues: residues 597–615 (PEKR…KEYI) and 632–642 (SFREKMNPKAW).

The polypeptide is Rhotekin-2 (rtkn2) (Danio rerio (Zebrafish)).